The primary structure comprises 2104 residues: Transmembrane matrix receptor MUP-4 (2104 aa).

A signal peptide spans 1 to 15 (MRWVPLVLLPLIASA). The Extracellular segment spans residues 16 to 1860 (ATTYQHRQTY…FCETAPSNLP (1845 aa)). EGF-like domains are found at residues 71-110 (VVNE…TSPD), 122-163 (TTNE…VSTS), and 175-213 (SVNE…ASPN). 6 disulfide bridges follow: cysteine 75–cysteine 89, cysteine 83–cysteine 98, cysteine 126–cysteine 142, cysteine 136–cysteine 151, cysteine 179–cysteine 192, and cysteine 186–cysteine 201. The WR1 domain maps to 220–265 (RVCNKPKAPEYYGQQSRQPQCSEGSGCGPNEECRFNTAGEKVCQCR). 3 consecutive EGF-like domains span residues 278-315 (VFSQ…VSPD), 327-360 (VRNE…SNCI), and 377-416 (AANQ…VSSN). 7 disulfides stabilise this stretch: cysteine 282–cysteine 294, cysteine 288–cysteine 303, cysteine 331–cysteine 344, cysteine 338–cysteine 353, cysteine 355–cysteine 359, cysteine 381–cysteine 395, and cysteine 389–cysteine 404. One can recognise a VWFA domain in the interval 437-612 (DLVFLIDGSG…DLNTRLRSAI (176 aa)). Asparagine 494 and asparagine 556 each carry an N-linked (GlcNAc...) asparagine glycan. EGF-like domains lie at 728–772 (SNDE…NKCE) and 819–857 (LIDE…KSPE). 21 disulfides stabilise this stretch: cysteine 732/cysteine 746, cysteine 740/cysteine 756, cysteine 758/cysteine 771, cysteine 823/cysteine 836, cysteine 830/cysteine 845, cysteine 873/cysteine 886, cysteine 880/cysteine 895, cysteine 923/cysteine 937, cysteine 931/cysteine 946, cysteine 972/cysteine 985, cysteine 979/cysteine 995, cysteine 1020/cysteine 1034, cysteine 1028/cysteine 1046, cysteine 1075/cysteine 1089, cysteine 1083/cysteine 1098, cysteine 1125/cysteine 1139, cysteine 1133/cysteine 1148, cysteine 1173/cysteine 1187, cysteine 1181/cysteine 1196, cysteine 1219/cysteine 1233, and cysteine 1227/cysteine 1242. An EGF-like 9; calcium-binding domain is found at 869–907 (QRNECLDGTHNCSMNADCIDLPDGFLCRCKEDFVDISPN). An N-linked (GlcNAc...) asparagine glycan is attached at asparagine 879. EGF-like domains lie at 919-958 (LVNE…HDEL), 968-1007 (LNQI…KSPL), 1016-1058 (VEPI…VGAV), 1071-1110 (LVNE…ESPV), 1121-1160 (LVNE…QKPE), 1169-1208 (IINE…EMPS), and 1215-1254 (RFDE…EISD). A glycan (N-linked (GlcNAc...) asparagine) is linked at asparagine 1037. Asparagine 1132 is a glycosylation site (N-linked (GlcNAc...) asparagine). Asparagine 1271, asparagine 1403, and asparagine 1576 each carry an N-linked (GlcNAc...) asparagine glycan. SEA domains follow at residues 1322 to 1444 (PTTS…DDAD) and 1495 to 1620 (AVES…PEQL). 3 EGF-like domains span residues 1622–1658 (PFSN…LNPS), 1669–1705 (GVNE…YVNS), and 1717–1754 (SIDY…LRKS). 11 disulfides stabilise this stretch: cysteine 1626/cysteine 1637, cysteine 1631/cysteine 1646, cysteine 1673/cysteine 1687, cysteine 1681/cysteine 1696, cysteine 1721/cysteine 1733, cysteine 1727/cysteine 1742, cysteine 1776/cysteine 1789, cysteine 1783/cysteine 1798, cysteine 1821/cysteine 1830, cysteine 1824/cysteine 1841, and cysteine 1843/cysteine 1852. 2 N-linked (GlcNAc...) asparagine glycosylation sites follow: asparagine 1730 and asparagine 1782. Residues 1772–1810 (DIDECALGLHNCSAAAICIDKKIGYECQCQEGYEDGNPS) form the EGF-like 20; calcium-binding domain. The EGF-like 21 domain occupies 1817–1853 (AASLCGLCNGHGDCIHDALSSNVTCACLDGYTGQFCE). N-linked (GlcNAc...) asparagine glycosylation is present at asparagine 1838. The chain crosses the membrane as a helical span at residues 1861-1881 (LILMTLLALLFLLLTLLCCLY). Over 1882–2104 (MCARCRCFGA…TTKAEEVNYF (223 aa)) the chain is Cytoplasmic. Residues 2031 to 2040 (SGAMMSSASG) show a composition bias toward low complexity. The segment at 2031 to 2104 (SGAMMSSASG…TTKAEEVNYF (74 aa)) is disordered. Basic and acidic residues-rich tracts occupy residues 2062-2076 (VYDR…HDFE) and 2083-2104 (TGTE…VNYF).

Abundant at hypodermal cell-matrix junctions overlying muscle of threefold embryos. Expression continues in body wall muscle in larvae and adults and is also detected in other regions where cells show mechanical attachment to the hypodermis including the inner surface of the pharynx, overlying anal and intestinal muscles, overlying vulval and uterine sex muscles, male tail muscle attachment zones and the six mechanosensory neurons (at protein level).

It is found in the cell junction. It localises to the hemidesmosome. The protein resides in the cytoplasm. Its subcellular location is the cytoskeleton. The protein localises to the cell membrane. Functionally, required for junctional attachments between hypodermis and muscle, and between the apical epithelial surface and the cuticular matrix. Essential for enclosure of the embryo by the hypodermis, hypodermal integrity, embryo elongation, and maintenance of hypodermal morphology in fully elongated embryos. The sequence is that of Transmembrane matrix receptor MUP-4 from Caenorhabditis elegans.